Here is a 407-residue protein sequence, read N- to C-terminus: Argininosuccinate synthase (407 aa).

Residue 10-18 (AYSGGLDTS) coordinates ATP. L-citrulline contacts are provided by Tyr-88 and Ser-93. Gly-118 serves as a coordination point for ATP. The L-aspartate site is built by Thr-120, Asn-124, and Asp-125. Asn-124 contributes to the L-citrulline binding site. L-citrulline is bound by residues Arg-128, Ser-177, Ser-186, Glu-263, and Tyr-275.

It belongs to the argininosuccinate synthase family. Type 1 subfamily. As to quaternary structure, homotetramer.

The protein localises to the cytoplasm. The enzyme catalyses L-citrulline + L-aspartate + ATP = 2-(N(omega)-L-arginino)succinate + AMP + diphosphate + H(+). The protein operates within amino-acid biosynthesis; L-arginine biosynthesis; L-arginine from L-ornithine and carbamoyl phosphate: step 2/3. This chain is Argininosuccinate synthase, found in Clostridium botulinum (strain Alaska E43 / Type E3).